Consider the following 163-residue polypeptide: Large ribosomal subunit protein uL11 (163 aa).

Belongs to the universal ribosomal protein uL11 family. As to quaternary structure, part of the ribosomal stalk of the 50S ribosomal subunit. Interacts with L10 and the large rRNA to form the base of the stalk. L10 forms an elongated spine to which L12 dimers bind in a sequential fashion forming a multimeric L10(L12)X complex.

Functionally, forms part of the ribosomal stalk which helps the ribosome interact with GTP-bound translation factors. This chain is Large ribosomal subunit protein uL11, found in Thermococcus onnurineus (strain NA1).